The primary structure comprises 452 residues: Tripartite motif-containing protein 49C (452 aa).

The segment at 15-56 (CPLCMNYFIDPVTIDCGHSFCRPCFYLNWQDIPFLVQCSECT) adopts an RING-type zinc-finger fold. The B box-type zinc finger occupies 88–129 (SEEQMCGTHRETKKIFCEVDRSLLCLLCSSSQEHRYHRHRPI). 4 residues coordinate Zn(2+): Cys93, His96, Cys115, and His121. The B30.2/SPRY domain maps to 269–452 (ELSAGPITGL…LRPIFCCIHF (184 aa)).

The chain is Tripartite motif-containing protein 49C (TRIM49C) from Homo sapiens (Human).